A 375-amino-acid polypeptide reads, in one-letter code: tRNA-specific 2-thiouridylase MnmA (375 aa).

ATP contacts are provided by residues 13 to 20 and M39; that span reads AMSGGVDS. C111 functions as the Nucleophile in the catalytic mechanism. A disulfide bond links C111 and C208. G135 serves as a coordination point for ATP. Residues 158-160 form an interaction with tRNA region; that stretch reads KDQ. C208 serves as the catalytic Cysteine persulfide intermediate. The segment at 313-314 is interaction with tRNA; sequence RY.

The protein belongs to the MnmA/TRMU family.

The protein resides in the cytoplasm. The enzyme catalyses S-sulfanyl-L-cysteinyl-[protein] + uridine(34) in tRNA + AH2 + ATP = 2-thiouridine(34) in tRNA + L-cysteinyl-[protein] + A + AMP + diphosphate + H(+). Catalyzes the 2-thiolation of uridine at the wobble position (U34) of tRNA, leading to the formation of s(2)U34. The protein is tRNA-specific 2-thiouridylase MnmA of Geotalea uraniireducens (strain Rf4) (Geobacter uraniireducens).